We begin with the raw amino-acid sequence, 312 residues long: tRNA dimethylallyltransferase (312 aa).

19–26 provides a ligand contact to ATP; that stretch reads GPSGSGKS. Position 21–26 (21–26) interacts with substrate; sequence SGSGKS. Residues 44–47 form an interaction with substrate tRNA region; it reads DSLS.

It belongs to the IPP transferase family. As to quaternary structure, monomer. Mg(2+) serves as cofactor.

The enzyme catalyses adenosine(37) in tRNA + dimethylallyl diphosphate = N(6)-dimethylallyladenosine(37) in tRNA + diphosphate. Its function is as follows. Catalyzes the transfer of a dimethylallyl group onto the adenine at position 37 in tRNAs that read codons beginning with uridine, leading to the formation of N6-(dimethylallyl)adenosine (i(6)A). The protein is tRNA dimethylallyltransferase of Helicobacter pylori (strain J99 / ATCC 700824) (Campylobacter pylori J99).